Consider the following 228-residue polypeptide: Small ribosomal subunit protein uS3 (228 aa).

The 69-residue stretch at 39-107 (VREYLQDKLK…PVHINIEEIR (69 aa)) folds into the KH type-2 domain.

The protein belongs to the universal ribosomal protein uS3 family. In terms of assembly, part of the 30S ribosomal subunit. Forms a tight complex with proteins S10 and S14.

Binds the lower part of the 30S subunit head. Binds mRNA in the 70S ribosome, positioning it for translation. This Pseudomonas syringae pv. syringae (strain B728a) protein is Small ribosomal subunit protein uS3.